The primary structure comprises 87 residues: Apolipoprotein C-I (87 aa).

The first 26 residues, 1-26 (MRLFLSLPVLVVVLAMVLEGPAPAQA), serve as a signal peptide directing secretion.

Belongs to the apolipoprotein C1 family.

The protein localises to the secreted. In terms of biological role, inhibitor of lipoprotein binding to the low density lipoprotein (LDL) receptor, LDL receptor-related protein, and very low density lipoprotein (VLDL) receptor. Associates with high density lipoproteins (HDL) and the triacylglycerol-rich lipoproteins in the plasma and makes up about 10% of the protein of the VLDL and 2% of that of HDL. Appears to interfere directly with fatty acid uptake and is also the major plasma inhibitor of cholesteryl ester transfer protein (CETP). Binds free fatty acids and reduces their intracellular esterification. Modulates the interaction of APOE with beta-migrating VLDL and inhibits binding of beta-VLDL to the LDL receptor-related protein. The protein is Apolipoprotein C-I (APOC1) of Zalophus californianus (California sealion).